The following is a 468-amino-acid chain: Peroxisome proliferator-activated receptor alpha (468 aa).

Residues Asn99–Phe173 constitute a DNA-binding region (nuclear receptor). 2 NR C4-type zinc fingers span residues Cys102 to Cys122 and Cys139 to Cys161. The region spanning Phe239–Asp466 is the NR LBD domain. Residues Ser280, Tyr314, and Tyr464 each contribute to the indeglitazar site. The interval Asp304 to Leu433 is required for heterodimerization with RXRA.

The protein belongs to the nuclear hormone receptor family. NR1 subfamily. In terms of assembly, heterodimer; with RXRA. This heterodimerization is required for DNA binding and transactivation activity. Interacts with NCOA3 coactivator. Interacts with CITED2; the interaction stimulates its transcriptional activity. Also interacts with PPARBP in vitro. Interacts with AKAP13, LPIN1, PRDM16 and coactivator NCOA6. Interacts with ASXL1 and ASXL2. Interacts with PER2. Interacts with SIRT1; the interaction seems to be modulated by NAD(+) levels. Interacts with CRY1 and CRY2. In hepatocytes, interacts with PAQR3 and HUWE1; the interactions promote PPARA poylubiquitination and HUWE1-mediated degradation. Post-translationally, ubiquitinated by E3 ubiquitin-protein ligase HUWE1; leading to proteasomal degradation. In terms of processing, phosphorylated. As to expression, skeletal muscle, liver, heart and kidney. Expressed in monocytes.

It localises to the nucleus. Functionally, ligand-activated transcription factor. Key regulator of lipid metabolism. Activated by the endogenous ligand 1-palmitoyl-2-oleoyl-sn-glycerol-3-phosphocholine (16:0/18:1-GPC). Activated by oleylethanolamide, a naturally occurring lipid that regulates satiety. Receptor for peroxisome proliferators such as hypolipidemic drugs and fatty acids. Regulates the peroxisomal beta-oxidation pathway of fatty acids. Functions as a transcription activator for the ACOX1 and P450 genes. Transactivation activity requires heterodimerization with RXRA and is antagonized by NR2C2. May be required for the propagation of clock information to metabolic pathways regulated by PER2. In Homo sapiens (Human), this protein is Peroxisome proliferator-activated receptor alpha (PPARA).